A 103-amino-acid chain; its full sequence is uncharacterized protein (103 aa).

The next 2 helical transmembrane spans lie at 42-62 (PFPL…VLLA) and 65-85 (TGTL…FICA).

It localises to the membrane. This is an uncharacterized protein from Saccharomyces cerevisiae (strain ATCC 204508 / S288c) (Baker's yeast).